We begin with the raw amino-acid sequence, 188 residues long: Molybdopterin synthase catalytic subunit (188 aa).

Low complexity predominate over residues 1–14; that stretch reads MTTQPPQDQTSTTP. The interval 1–23 is disordered; the sequence is MTTQPPQDQTSTTPSLPPHLDPT. Residues 134–135, Lys-150, and 157–159 each bind substrate; these read HR and KRE.

It belongs to the MoaE family. MOCS2B subfamily. Heterotetramer; composed of 2 small (MOCS2A) and 2 large (MOCS2B) subunits.

Its subcellular location is the cytoplasm. The catalysed reaction is 2 [molybdopterin-synthase sulfur-carrier protein]-C-terminal-Gly-aminoethanethioate + cyclic pyranopterin phosphate + H2O = molybdopterin + 2 [molybdopterin-synthase sulfur-carrier protein]-C-terminal Gly-Gly + 2 H(+). It participates in cofactor biosynthesis; molybdopterin biosynthesis. Its function is as follows. Catalytic subunit of the molybdopterin synthase complex, a complex that catalyzes the conversion of precursor Z into molybdopterin. Acts by mediating the incorporation of 2 sulfur atoms from thiocarboxylated MOCS2A into precursor Z to generate a dithiolene group. The polypeptide is Molybdopterin synthase catalytic subunit (Neosartorya fischeri (strain ATCC 1020 / DSM 3700 / CBS 544.65 / FGSC A1164 / JCM 1740 / NRRL 181 / WB 181) (Aspergillus fischerianus)).